Here is a 245-residue protein sequence, read N- to C-terminus: Uridylate kinase (245 aa).

13-16 (KLSG) contacts ATP. Gly56 contacts UMP. Residues Gly57 and Arg61 each contribute to the ATP site. UMP contacts are provided by residues Asp76 and 138-145 (TGRPFFTT). ATP contacts are provided by Asn166, Tyr172, and Asp175.

It belongs to the UMP kinase family. As to quaternary structure, homohexamer.

The protein resides in the cytoplasm. It catalyses the reaction UMP + ATP = UDP + ADP. The protein operates within pyrimidine metabolism; CTP biosynthesis via de novo pathway; UDP from UMP (UMPK route): step 1/1. Its activity is regulated as follows. Inhibited by UTP. Functionally, catalyzes the reversible phosphorylation of UMP to UDP. This is Uridylate kinase from Mycoplasma mobile (strain ATCC 43663 / 163K / NCTC 11711) (Mesomycoplasma mobile).